The chain runs to 235 residues: Cell division protein FtsQ (235 aa).

Topologically, residues 1–6 (MERLTR) are cytoplasmic. The chain crosses the membrane as a helical span at residues 7–25 (WLLVMMAMLLAASGLVWFY). The Periplasmic segment spans residues 26–235 (NSNHLPVKQV…DGLPEKESEE (210 aa)). The region spanning 30–99 (LPVKQVSLKG…DTVEVVLTER (70 aa)) is the POTRA domain.

It belongs to the FtsQ/DivIB family. FtsQ subfamily. In terms of assembly, part of a complex composed of FtsB, FtsL and FtsQ.

Its subcellular location is the cell inner membrane. In terms of biological role, essential cell division protein. May link together the upstream cell division proteins, which are predominantly cytoplasmic, with the downstream cell division proteins, which are predominantly periplasmic. May control correct divisome assembly. This Neisseria meningitidis serogroup B (strain ATCC BAA-335 / MC58) protein is Cell division protein FtsQ.